Reading from the N-terminus, the 155-residue chain is Pathogenesis-related protein 2 (155 aa).

The protein belongs to the BetVI family.

The polypeptide is Pathogenesis-related protein 2 (Phaseolus vulgaris (Kidney bean)).